The sequence spans 247 residues: Acyl-coenzyme A thioesterase THEM5 (247 aa).

Catalysis depends on D167, which acts as the Proton donor/acceptor.

The protein belongs to the THEM4/THEM5 thioesterase family. In terms of assembly, homodimer.

It localises to the mitochondrion matrix. It carries out the reaction hexadecanoyl-CoA + H2O = hexadecanoate + CoA + H(+). It catalyses the reaction (9Z,12Z)-octadecadienoyl-CoA + H2O = (9Z,12Z)-octadecadienoate + CoA + H(+). The catalysed reaction is tetradecanoyl-CoA + H2O = tetradecanoate + CoA + H(+). The enzyme catalyses (9Z)-octadecenoyl-CoA + H2O = (9Z)-octadecenoate + CoA + H(+). It carries out the reaction (9Z)-hexadecenoyl-CoA + H2O = (9Z)-hexadecenoate + CoA + H(+). It catalyses the reaction (5Z,8Z,11Z,14Z)-eicosatetraenoyl-CoA + H2O = (5Z,8Z,11Z,14Z)-eicosatetraenoate + CoA + H(+). The catalysed reaction is octadecanoyl-CoA + H2O = octadecanoate + CoA + H(+). Functionally, has acyl-CoA thioesterase activity towards long-chain (C16 and C18) fatty acyl-CoA substrates, with a preference for linoleoyl-CoA and other unsaturated long-chain fatty acid-CoA esters. Plays an important role in mitochondrial fatty acid metabolism, and in remodeling of the mitochondrial lipid cardiolipin. Required for normal mitochondrial function. In Homo sapiens (Human), this protein is Acyl-coenzyme A thioesterase THEM5 (THEM5).